The sequence spans 222 residues: Small ribosomal subunit protein eS1 (222 aa).

This sequence belongs to the eukaryotic ribosomal protein eS1 family.

The polypeptide is Small ribosomal subunit protein eS1 (Pyrobaculum calidifontis (strain DSM 21063 / JCM 11548 / VA1)).